The following is a 106-amino-acid chain: Ribulose bisphosphate carboxylase small subunit (106 aa).

This sequence belongs to the RuBisCO small chain family. As to quaternary structure, heterohexadecamer of 8 large and 8 small subunits.

The protein resides in the plastid. Its subcellular location is the cyanelle. Functionally, ruBisCO catalyzes two reactions: the carboxylation of D-ribulose 1,5-bisphosphate, the primary event in carbon dioxide fixation, as well as the oxidative fragmentation of the pentose substrate. Both reactions occur simultaneously and in competition at the same active site. Although the small subunit is not catalytic it is essential for maximal activity. In Cyanophora paradoxa, this protein is Ribulose bisphosphate carboxylase small subunit.